Here is a 75-residue protein sequence, read N- to C-terminus: ATP synthase subunit epsilon, mitochondrial (75 aa).

The N-terminal 9 residues, 1 to 9, are a transit peptide targeting the mitochondrion; it reads MIRRSCALL.

It belongs to the eukaryotic ATPase epsilon family. In terms of assembly, F-type ATPases have 2 components, F(1) - the catalytic core - and F(o) - the membrane proton channel. F(1) has five subunits: alpha(3), beta(3), gamma(1), delta(1), epsilon(1), plus the additional subunit P18 (Tb427.05.1710) that is not present in F(1)F(o) ATP synthase from metazoa. Subunit P18 (Tb927.5.1710) interacts with the alpha subunit with a 1:1 stoichiometry; the interaction is direct. Subunit gamma is part of the central stalk. F(o) has three main subunits: a, b and c. The trypanosomal ATPase complex contains additional subunits that are not present in the F(1)F(o) ATP synthase from metazoa.

The protein localises to the mitochondrion. It localises to the mitochondrion inner membrane. Mitochondrial membrane ATP synthase (F(1)F(o) ATP synthase) produces ATP from ADP in the presence of a proton gradient across the membrane which is generated by electron transport complexes of the respiratory chain. F-type ATPases consist of two structural domains, F(1) - containing the extramembraneous catalytic core, and F(o) - containing the membrane proton channel, linked together by a central stalk and a peripheral stalk. During catalysis, ATP synthesis in the catalytic domain of F(1) is coupled via a rotary mechanism of the central stalk subunits to proton translocation. Subunits alpha and beta form the catalytic core in F(1). Rotation of the central stalk against the surrounding alpha(3)beta(3) subunits leads to hydrolysis of ATP in three separate catalytic sites on the beta subunits. Contrary to the procyclic, insect form that requires F(1)F(o) ATP synthase for ATP synthesis, the bloodstream form relies on ATP hydrolysis by F(1)F(o) ATP synthase to maintain its mitochondrial membrane potential. This is ATP synthase subunit epsilon, mitochondrial from Trypanosoma brucei brucei.